A 640-amino-acid polypeptide reads, in one-letter code: Threonine--tRNA ligase (640 aa).

A TGS domain is found at 1–61; it reads MPTITLPDGS…ENDASLQIIT (61 aa). The interval 242 to 533 is catalytic; it reads DHRKIGKRLG…LIEHYEGAFP (292 aa). Zn(2+) contacts are provided by C333, H384, and H510.

It belongs to the class-II aminoacyl-tRNA synthetase family. As to quaternary structure, homodimer. Zn(2+) is required as a cofactor.

Its subcellular location is the cytoplasm. It catalyses the reaction tRNA(Thr) + L-threonine + ATP = L-threonyl-tRNA(Thr) + AMP + diphosphate + H(+). Functionally, catalyzes the attachment of threonine to tRNA(Thr) in a two-step reaction: L-threonine is first activated by ATP to form Thr-AMP and then transferred to the acceptor end of tRNA(Thr). Also edits incorrectly charged L-seryl-tRNA(Thr). This chain is Threonine--tRNA ligase, found in Pseudomonas savastanoi pv. phaseolicola (strain 1448A / Race 6) (Pseudomonas syringae pv. phaseolicola (strain 1448A / Race 6)).